Reading from the N-terminus, the 275-residue chain is 2,3,4,5-tetrahydropyridine-2,6-dicarboxylate N-succinyltransferase (275 aa).

Substrate is bound by residues arginine 106 and aspartate 143.

It belongs to the transferase hexapeptide repeat family. Homotrimer.

It is found in the cytoplasm. It catalyses the reaction (S)-2,3,4,5-tetrahydrodipicolinate + succinyl-CoA + H2O = (S)-2-succinylamino-6-oxoheptanedioate + CoA. It participates in amino-acid biosynthesis; L-lysine biosynthesis via DAP pathway; LL-2,6-diaminopimelate from (S)-tetrahydrodipicolinate (succinylase route): step 1/3. The chain is 2,3,4,5-tetrahydropyridine-2,6-dicarboxylate N-succinyltransferase from Ralstonia nicotianae (strain ATCC BAA-1114 / GMI1000) (Ralstonia solanacearum).